Consider the following 603-residue polypeptide: Protein SHORT-ROOT 2 (603 aa).

Disordered regions lie at residues 11–58 (HHHH…HSHS) and 106–140 (DFSS…SSAG). Residues 31 to 44 (SYPSSRGSTSSPSS) are compositionally biased toward low complexity. A compositionally biased stretch (basic residues) spans 45-58 (HHTHNHTYYHHSHS). Residues 108 to 125 (SSSSSSRQFHSGTGAPSS) are compositionally biased toward low complexity. A GRAS domain is found at 179–602 (AAPSSSGRWA…QPVVWASAWK (424 aa)). The leucine repeat I (LRI) stretch occupies residues 186 to 249 (RWAAQLLMEC…LTTSGPRTLR (64 aa)). A VHIID region spans residues 268 to 354 (ALKFQELSPW…DTPHLSITTV (87 aa)). Positions 318–322 (LHILD) match the VHIID motif. Positions 370–406 (EIGQRLEKFARLMGVPFSFRAVHHAGDLADLDLAALD) are leucine repeat II (LRII). Residues 416–514 (LAVNCVNALR…ERAVGRAIVD (99 aa)) are PFYRE. The SAW stretch occupies residues 517-602 (SCPASQSAER…QPVVWASAWK (86 aa)).

This sequence belongs to the GRAS family. In terms of assembly, does not interact with SCR1.

It is found in the nucleus. Putative transcription factor involved in asymmetric cell division. In Oryza sativa subsp. indica (Rice), this protein is Protein SHORT-ROOT 2 (SHR2).